A 56-amino-acid chain; its full sequence is Small ribosomal subunit protein uS14 (56 aa).

Residues Cys-21, Cys-24, Cys-39, and Cys-42 each coordinate Zn(2+).

Belongs to the universal ribosomal protein uS14 family. As to quaternary structure, component of the 40S small ribosomal subunit. It depends on Zn(2+) as a cofactor.

It localises to the cytoplasm. The protein resides in the cytosol. It is found in the rough endoplasmic reticulum. This Spodoptera frugiperda (Fall armyworm) protein is Small ribosomal subunit protein uS14 (RpS29).